The primary structure comprises 1026 residues: Exportin-T (1026 aa).

It belongs to the exportin family.

The protein resides in the nucleus. It localises to the cytoplasm. TRNA nucleus export receptor which facilitates tRNA translocation across the nuclear pore complex. Involved in pre-tRNA splicing, probably by affecting the interaction of pre-tRNA with splicing endonuclease. The protein is Exportin-T (los1) of Aspergillus oryzae (strain ATCC 42149 / RIB 40) (Yellow koji mold).